The following is a 943-amino-acid chain: Mechanosensitive ion channel protein BA (943 aa).

Residues 1 to 67 (MPNPNDVTID…PPSSSLGFGH (67 aa)) form a disordered region. Topologically, residues 1–107 (MPNPNDVTID…AVLNFSTVTR (107 aa)) are cytoplasmic. The span at 14–37 (TSVSSRGQTGARNNSTNIPNSPSG) shows a compositional bias: polar residues. A helical transmembrane segment spans residues 108–130 (YLIYIAPLAALLAIPIIVGATAA). Residues 131-149 (EDAKIGGVSLPWFFCWVEV) lie on the Lumenal side of the membrane. The helical transmembrane segment at 150–175 (VWVSLWVCKLVAKVIPFVFQFVCGIV) threads the bilayer. Residues 176 to 195 (SAGTRKYALILRNLEIPITM) are Cytoplasmic-facing. Residues 196 to 214 (VLWMIVSLVTFLPIMVYNP) form a helical membrane-spanning segment. At 215–233 (RNKREGDTETKSWEKSVKN) the chain is on the lumenal side. The chain crosses the membrane as a helical span at residues 234–259 (VLFAFLVCALIFLGEKTLVQLISISY). At 260–468 (HRKQFDARIK…DQAIHVLDNL (209 aa)) the chain is on the cytoplasmic side. Residues 412-447 (GKEAEAEECFTMLDRDGNGDISLDEIILAISEIGRT) enclose the EF-hand domain. Ca(2+) contacts are provided by Asp-425, Asp-427, Asn-429, Asp-431, and Glu-436. Residues 469–489 (LATIAFIIAVLVFVSFVTSGF) form a helical membrane-spanning segment. Residues 490-502 (GTVIAAGATSLLS) are Lumenal-facing. Residues 503 to 523 (LSFVFATTAQEVLGSCIFLFV) traverse the membrane as a helical segment. Topologically, residues 524–943 (KHPFDIGDRV…QRRNYESRRL (420 aa)) are cytoplasmic. A disordered region spans residues 677–943 (PGAAAEDAAA…QRRNYESRRL (267 aa)). Low complexity-rich tracts occupy residues 678-687 (GAAAEDAAAA) and 744-759 (GASA…AGSA). Polar residues predominate over residues 760 to 781 (YSETTLNNTVSEPYQRSFTPNT). Positions 798-810 (TERHLGVSHDSIA) are enriched in basic and acidic residues. A compositionally biased stretch (polar residues) spans 827 to 842 (TTANQSLASPTTMQSE). Residues 857 to 880 (PSSSQYSQQYPQQQSQSPYSYTYS) are compositionally biased toward low complexity. The segment covering 886 to 904 (PESSLQPLEHTTSYNQSLP) has biased composition (polar residues). Basic and acidic residues predominate over residues 916–943 (NSLEGHSPHVDPRHMTEEQRRNYESRRL).

This sequence belongs to the MscS (TC 1.A.23) family.

Its subcellular location is the cell membrane. The enzyme catalyses Ca(2+)(in) = Ca(2+)(out). Acts as a mechanosensitive calcium channel in response to membrane stretch. Regulates intracellular calcium levels and cell volume for survival in response to hypo-osmotic shock. Involved in maintaining vacuole integrity and protecting the nuclear envelope upon hypo-osmotic shock. seems to contribute to CaCl2 toxicityIn contracstz to mscA, mscB seems to contribute to CaCl(2) toxicity. The polypeptide is Mechanosensitive ion channel protein BA (Emericella nidulans (strain FGSC A4 / ATCC 38163 / CBS 112.46 / NRRL 194 / M139) (Aspergillus nidulans)).